A 387-amino-acid chain; its full sequence is Protein NDRG3 (387 aa).

A disordered region spans residues 329–387 (PSASMTRLVRSRTHSASSSGSMEMPRSRSHTSNAQLQSTSNNSLSNQIQETPHTIELSC). Low complexity predominate over residues 359–377 (TSNAQLQSTSNNSLSNQIQ).

Belongs to the NDRG family.

The sequence is that of Protein NDRG3 from Xenopus tropicalis (Western clawed frog).